A 354-amino-acid chain; its full sequence is MNDSAHIDYARYDHIRPLLWTGDALELLDQRKLPFEVAHVRCDSSDAVAEAIHSLAVRGAPAIGIAAGWGVVLAARDIAADDGSAALQKLEPALLRLNAARPTAVNLAWALMRMRRVLGAAGADWREVIAREAQAIADEDLAANRHMGALGAALIAPGSGVLTHCNTGSLATAGFGTALGVIRAGMAQQRIAKVFAGETRPWLQGARLTVWELQQDGIDATLIADSAASHLMKSGLVQWVIVGADRICANGDTANKIGTYQLAIAARHHGVKFMVVAPSSTVDMATASGDQIEIEQRDPGELFGVGGVRTVADGIHAWNPVFDVTPGDLIDAIVTERGVIAQPDLARMQAAFGA.

Substrate contacts are provided by residues 58–60, Arg101, and Gln204; that span reads RGA. Asp245 serves as the catalytic Proton donor. Residue 255 to 256 coordinates substrate; that stretch reads NK.

It belongs to the eIF-2B alpha/beta/delta subunits family. MtnA subfamily.

The catalysed reaction is 5-(methylsulfanyl)-alpha-D-ribose 1-phosphate = 5-(methylsulfanyl)-D-ribulose 1-phosphate. Its pathway is amino-acid biosynthesis; L-methionine biosynthesis via salvage pathway; L-methionine from S-methyl-5-thio-alpha-D-ribose 1-phosphate: step 1/6. Its function is as follows. Catalyzes the interconversion of methylthioribose-1-phosphate (MTR-1-P) into methylthioribulose-1-phosphate (MTRu-1-P). In Xanthomonas euvesicatoria pv. vesicatoria (strain 85-10) (Xanthomonas campestris pv. vesicatoria), this protein is Methylthioribose-1-phosphate isomerase.